A 61-amino-acid chain; its full sequence is Protein CopA/IncA (61 aa).

In terms of biological role, controls the copy number in gene replication. This Escherichia coli protein is Protein CopA/IncA (copA).